Here is a 704-residue protein sequence, read N- to C-terminus: Elongation factor G (704 aa).

Positions 8–290 (EKYRNIGICA…GVVRYLPAPN (283 aa)) constitute a tr-type G domain. Residues 17–24 (AHVDAGKT), 88–92 (DTPGH), and 142–145 (NKMD) contribute to the GTP site.

This sequence belongs to the TRAFAC class translation factor GTPase superfamily. Classic translation factor GTPase family. EF-G/EF-2 subfamily.

The protein localises to the cytoplasm. Catalyzes the GTP-dependent ribosomal translocation step during translation elongation. During this step, the ribosome changes from the pre-translocational (PRE) to the post-translocational (POST) state as the newly formed A-site-bound peptidyl-tRNA and P-site-bound deacylated tRNA move to the P and E sites, respectively. Catalyzes the coordinated movement of the two tRNA molecules, the mRNA and conformational changes in the ribosome. This is Elongation factor G from Francisella tularensis subsp. holarctica (strain LVS).